The following is a 195-amino-acid chain: Small ribosomal subunit protein eS7 (195 aa).

Residues T146 and T151 each carry the phosphothreonine modification. S172 and S173 each carry phosphoserine.

Belongs to the eukaryotic ribosomal protein eS7 family. Component of the small ribosomal subunit (SSU). Mature yeast ribosomes consist of a small (40S) and a large (60S) subunit. The 40S small subunit contains 1 molecule of ribosomal RNA (18S rRNA) and at least 33 different proteins. The large 60S subunit contains 3 rRNA molecules (25S, 5.8S and 5S rRNA) and at least 46 different proteins. Interacts with snoRNA U3. uS11 interacts with MPP10. Component of the ribosomal small subunit (SSU) processome composed of at least 40 protein subunits and snoRNA U3.

It localises to the cytoplasm. The protein localises to the nucleus. It is found in the nucleolus. In terms of biological role, component of the ribosome, a large ribonucleoprotein complex responsible for the synthesis of proteins in the cell. The small ribosomal subunit (SSU) binds messenger RNAs (mRNAs) and translates the encoded message by selecting cognate aminoacyl-transfer RNA (tRNA) molecules. The large subunit (LSU) contains the ribosomal catalytic site termed the peptidyl transferase center (PTC), which catalyzes the formation of peptide bonds, thereby polymerizing the amino acids delivered by tRNAs into a polypeptide chain. The nascent polypeptides leave the ribosome through a tunnel in the LSU and interact with protein factors that function in enzymatic processing, targeting, and the membrane insertion of nascent chains at the exit of the ribosomal tunnel. eS7 is involved in nucleolar processing of pre-18S ribosomal RNA and ribosome assembly. The protein is Small ribosomal subunit protein eS7 (rps7) of Schizosaccharomyces pombe (strain 972 / ATCC 24843) (Fission yeast).